Consider the following 416-residue polypeptide: Phosphatidylinositol 5-phosphate 4-kinase type-2 beta (416 aa).

An N-acetylserine modification is found at Ser-2. Phosphothreonine is present on Thr-8. Ser-19 bears the Phosphoserine mark. Residues 38-415 enclose the PIPK domain; sequence ASEPILSVLM…RFNEFMSNIL (378 aa). The tract at residues 64–70 is required for interaction with PIP5K1A; the sequence is VMLMPDD. N6-acetyllysine is present on residues Lys-94 and Lys-150. ATP is bound by residues 202–204 and Lys-214; that span reads RNV. GTP contacts are provided by residues 203–204 and Lys-214; that span reads NV. Thr-322 is subject to Phosphothreonine. Position 326 is a phosphoserine (Ser-326). Asp-369 is a binding site for GTP.

As to quaternary structure, homodimer. Binds TNFRSF1A. Interacts with PIP4K2A; the interaction suppresses ubiquitination by the SPOP/CUL3 complex. Probably interacts with PIP5K1A; the interaction inhibits PIP5K1A kinase activity. Ubiquitinated by the SPOP/CUL3 complex. Ubiquitination is stimulated by PtdIns5P levels. In terms of processing, phosphorylated on serine residues.

The protein localises to the endoplasmic reticulum membrane. It is found in the cell membrane. The protein resides in the nucleus. Its subcellular location is the cytoplasm. It carries out the reaction a 1,2-diacyl-sn-glycero-3-phospho-(1D-myo-inositol-5-phosphate) + ATP = a 1,2-diacyl-sn-glycero-3-phospho-(1D-myo-inositol-4,5-bisphosphate) + ADP + H(+). It catalyses the reaction 1,2-dihexadecanoyl-sn-glycero-3-phospho-(1D-myo-inositol-5-phosphate) + ATP = 1,2-dihexadecanoyl-sn-glycero-3-phospho-(1D-myo-inositol-4,5-bisphosphate) + ADP + H(+). The catalysed reaction is 1,2-dihexadecanoyl-sn-glycero-3-phospho-(1D-myo-inositol-5-phosphate) + GTP = 1,2-dihexadecanoyl-sn-glycero-3-phospho-(1D-myo-inositol-4,5-bisphosphate) + GDP + H(+). Participates in the biosynthesis of phosphatidylinositol 4,5-bisphosphate. Preferentially utilizes GTP, rather than ATP, for PI(5)P phosphorylation and its activity reflects changes in direct proportion to the physiological GTP concentration. Its GTP-sensing activity is critical for metabolic adaptation. In collaboration with PIP4K2A, has a role in mediating autophagy in times of nutrient stress. Required for autophagosome-lysosome fusion and the regulation of cellular lipid metabolism. PIP4Ks negatively regulate insulin signaling through a catalytic-independent mechanism. They interact with PIP5Ks and suppress PIP5K-mediated PtdIns(4,5)P2 synthesis and insulin-dependent conversion to PtdIns(3,4,5)P3. In Mus musculus (Mouse), this protein is Phosphatidylinositol 5-phosphate 4-kinase type-2 beta.